The following is a 152-amino-acid chain: 3-hydroxyacyl-[acyl-carrier-protein] dehydratase FabZ (152 aa).

Residue His-57 is part of the active site.

This sequence belongs to the thioester dehydratase family. FabZ subfamily.

It is found in the cytoplasm. It catalyses the reaction a (3R)-hydroxyacyl-[ACP] = a (2E)-enoyl-[ACP] + H2O. Its function is as follows. Involved in unsaturated fatty acids biosynthesis. Catalyzes the dehydration of short chain beta-hydroxyacyl-ACPs and long chain saturated and unsaturated beta-hydroxyacyl-ACPs. This Bradyrhizobium sp. (strain BTAi1 / ATCC BAA-1182) protein is 3-hydroxyacyl-[acyl-carrier-protein] dehydratase FabZ.